Reading from the N-terminus, the 134-residue chain is Large ribosomal subunit protein bL17 (134 aa).

The protein belongs to the bacterial ribosomal protein bL17 family. In terms of assembly, part of the 50S ribosomal subunit. Contacts protein L32.

The polypeptide is Large ribosomal subunit protein bL17 (Aromatoleum aromaticum (strain DSM 19018 / LMG 30748 / EbN1) (Azoarcus sp. (strain EbN1))).